The sequence spans 437 residues: UDP-N-acetylmuramate--L-alanine ligase (437 aa).

114-120 (GTHGKTS) is an ATP binding site.

It belongs to the MurCDEF family.

It localises to the cytoplasm. The catalysed reaction is UDP-N-acetyl-alpha-D-muramate + L-alanine + ATP = UDP-N-acetyl-alpha-D-muramoyl-L-alanine + ADP + phosphate + H(+). It functions in the pathway cell wall biogenesis; peptidoglycan biosynthesis. In terms of biological role, cell wall formation. This Lactobacillus johnsonii (strain CNCM I-12250 / La1 / NCC 533) protein is UDP-N-acetylmuramate--L-alanine ligase.